We begin with the raw amino-acid sequence, 272 residues long: Undecaprenyl-diphosphatase (272 aa).

Transmembrane regions (helical) follow at residues 4–24 (FEVI…FLPI), 43–63 (GGRV…CWLY), 86–106 (ISVL…VDFI), 109–129 (VLFS…IIFW), 145–165 (ITFK…IPGT), 186–206 (TEFS…FDLI), 222–242 (VGFV…VLFV), and 249–269 (VFAW…MFFN).

This sequence belongs to the UppP family.

The protein localises to the cell inner membrane. It carries out the reaction di-trans,octa-cis-undecaprenyl diphosphate + H2O = di-trans,octa-cis-undecaprenyl phosphate + phosphate + H(+). Its function is as follows. Catalyzes the dephosphorylation of undecaprenyl diphosphate (UPP). Confers resistance to bacitracin. This is Undecaprenyl-diphosphatase from Acinetobacter baumannii (strain AB307-0294).